The primary structure comprises 201 residues: Probable molybdenum cofactor guanylyltransferase (201 aa).

GTP is bound by residues 20–22 (LAG), lysine 32, aspartate 77, and aspartate 106. Mg(2+) is bound at residue aspartate 106.

This sequence belongs to the MobA family. Mg(2+) is required as a cofactor.

It is found in the cytoplasm. It catalyses the reaction Mo-molybdopterin + GTP + H(+) = Mo-molybdopterin guanine dinucleotide + diphosphate. Its function is as follows. Transfers a GMP moiety from GTP to Mo-molybdopterin (Mo-MPT) cofactor (Moco or molybdenum cofactor) to form Mo-molybdopterin guanine dinucleotide (Mo-MGD) cofactor. The chain is Probable molybdenum cofactor guanylyltransferase from Aquifex aeolicus (strain VF5).